Consider the following 29-residue polypeptide: Potassium channel toxin alpha-KTx 20.1 (29 aa).

Disulfide bonds link Cys2–Cys20, Cys7–Cys24, and Cys11–Cys26.

It belongs to the short scorpion toxin superfamily. Potassium channel inhibitor family. Alpha-KTx 20 subfamily. Expressed by the venom gland.

The protein localises to the secreted. In terms of biological role, reduces potassium currents through Kv1.2/KCNA2 and Kv1.3/KCNA3 voltage-gated potassium channels. In Tityus trivittatus (Argentinean scorpion), this protein is Potassium channel toxin alpha-KTx 20.1.